Here is a 283-residue protein sequence, read N- to C-terminus: Polyamine aminopropyltransferase (283 aa).

The 234-residue stretch at S5–E238 folds into the PABS domain. Q32 is an S-methyl-5'-thioadenosine binding site. Residues H63 and D87 each contribute to the spermidine site. S-methyl-5'-thioadenosine contacts are provided by residues E107 and D139–G140. Residue D158 is the Proton acceptor of the active site. Residue D158–D161 coordinates spermidine.

Belongs to the spermidine/spermine synthase family. In terms of assembly, homodimer or homotetramer.

Its subcellular location is the cytoplasm. The enzyme catalyses S-adenosyl 3-(methylsulfanyl)propylamine + putrescine = S-methyl-5'-thioadenosine + spermidine + H(+). It functions in the pathway amine and polyamine biosynthesis; spermidine biosynthesis; spermidine from putrescine: step 1/1. Catalyzes the irreversible transfer of a propylamine group from the amino donor S-adenosylmethioninamine (decarboxy-AdoMet) to putrescine (1,4-diaminobutane) to yield spermidine. This Prochlorococcus marinus (strain MIT 9312) protein is Polyamine aminopropyltransferase.